The primary structure comprises 406 residues: B3 domain-containing protein Os11g0197600 (406 aa).

The disordered stretch occupies residues 1–20 (MVVREKQGGRMGKGKGKGKE). Positions 30-123 (RSFFRVLLTL…QFSVTVFEPS (94 aa)) form a DNA-binding region, TF-B3 1. Residues 199–245 (ESSRRKRAGASAGKSKVTSTSHNSTRGSSCSSDEDNSSSKSPNPPFL) are disordered. Polar residues predominate over residues 214-225 (KVTSTSHNSTRG). A DNA-binding region (TF-B3 2) is located at residues 298–393 (AVQIMMESYV…NIKVHIYRVV (96 aa)).

The protein resides in the nucleus. This chain is B3 domain-containing protein Os11g0197600, found in Oryza sativa subsp. japonica (Rice).